The following is a 54-amino-acid chain: UPF0391 membrane protein BAV1230 (54 aa).

The next 2 helical transmembrane spans lie at 5 to 25 (AAVFFVIALIAAVLGFGGIAA) and 27 to 47 (AAGIAKILFFVFLVLALLSVL).

Belongs to the UPF0391 family.

It localises to the cell membrane. The chain is UPF0391 membrane protein BAV1230 from Bordetella avium (strain 197N).